The following is a 427-amino-acid chain: 3-phosphoshikimate 1-carboxyvinyltransferase (427 aa).

Residues Lys-22, Ser-23, and Arg-27 each contribute to the 3-phosphoshikimate site. Lys-22 provides a ligand contact to phosphoenolpyruvate. Phosphoenolpyruvate-binding residues include Gly-96 and Arg-124. Ser-169, Ser-170, Gln-171, Ser-197, Asp-313, Asn-336, and Lys-340 together coordinate 3-phosphoshikimate. Gln-171 contributes to the phosphoenolpyruvate binding site. Asp-313 (proton acceptor) is an active-site residue. Positions 344, 386, and 411 each coordinate phosphoenolpyruvate.

It belongs to the EPSP synthase family. Monomer.

Its subcellular location is the cytoplasm. The catalysed reaction is 3-phosphoshikimate + phosphoenolpyruvate = 5-O-(1-carboxyvinyl)-3-phosphoshikimate + phosphate. The protein operates within metabolic intermediate biosynthesis; chorismate biosynthesis; chorismate from D-erythrose 4-phosphate and phosphoenolpyruvate: step 6/7. Catalyzes the transfer of the enolpyruvyl moiety of phosphoenolpyruvate (PEP) to the 5-hydroxyl of shikimate-3-phosphate (S3P) to produce enolpyruvyl shikimate-3-phosphate and inorganic phosphate. This Klebsiella pneumoniae (strain 342) protein is 3-phosphoshikimate 1-carboxyvinyltransferase.